Here is a 444-residue protein sequence, read N- to C-terminus: Adenylosuccinate synthetase (444 aa).

GTP contacts are provided by residues 12–18 (GDEGKGK) and 40–42 (GHT). The Proton acceptor role is filled by D13. Mg(2+) contacts are provided by D13 and G40. IMP contacts are provided by residues 13–16 (DEGK), 38–41 (NAGH), T128, R142, Q223, T238, and R302. The Proton donor role is filled by H41. 298-304 (TTTGRRR) is a substrate binding site. GTP is bound by residues R304, 330-332 (KLD), and 412-414 (SLG).

Belongs to the adenylosuccinate synthetase family. As to quaternary structure, homodimer. The cofactor is Mg(2+).

It is found in the cytoplasm. The enzyme catalyses IMP + L-aspartate + GTP = N(6)-(1,2-dicarboxyethyl)-AMP + GDP + phosphate + 2 H(+). It participates in purine metabolism; AMP biosynthesis via de novo pathway; AMP from IMP: step 1/2. Its function is as follows. Plays an important role in the de novo pathway of purine nucleotide biosynthesis. Catalyzes the first committed step in the biosynthesis of AMP from IMP. This chain is Adenylosuccinate synthetase, found in Synechococcus elongatus (strain ATCC 33912 / PCC 7942 / FACHB-805) (Anacystis nidulans R2).